The following is a 280-amino-acid chain: uncharacterized protein (280 aa).

Positions 1–78 (MDVIQRIKEK…VLLAQSISRA (78 aa)) constitute an HTH rpiR-type domain. Residues 37–57 (ISDLSEKAGVKSEASVVKFYK) constitute a DNA-binding region (H-T-H motif). The SIS domain maps to 123-263 (TVDLFKNAQR…YTLLAARDPR (141 aa)).

This is an uncharacterized protein from Thermotoga maritima (strain ATCC 43589 / DSM 3109 / JCM 10099 / NBRC 100826 / MSB8).